A 125-amino-acid polypeptide reads, in one-letter code: Profilin-P (125 aa).

Residue Ser-2 is modified to N-acetylserine.

It belongs to the profilin family. Occurs in many kinds of cells as a complex with monomeric actin in a 1:1 ratio.

It is found in the cytoplasm. It localises to the cytoskeleton. In terms of biological role, binds to actin and affects the structure of the cytoskeleton. At high concentrations, profilin prevents the polymerization of actin, whereas it enhances it at low concentrations. By binding to PIP2, it inhibits the formation of IP3 and DG. This chain is Profilin-P (PROP), found in Physarum polycephalum (Slime mold).